Here is a 176-residue protein sequence, read N- to C-terminus: PKHD-type hydroxylase Mfla_0096 (176 aa).

In terms of domain architecture, Fe2OG dioxygenase spans 78-147 (KVFPPLFNRY…NQIARGTYGA (70 aa)).

Fe(2+) is required as a cofactor. L-ascorbate serves as cofactor.

The sequence is that of PKHD-type hydroxylase Mfla_0096 from Methylobacillus flagellatus (strain ATCC 51484 / DSM 6875 / VKM B-1610 / KT).